A 715-amino-acid polypeptide reads, in one-letter code: Fatty acid oxidation complex subunit alpha (715 aa).

The tract at residues 1 to 190 (MIYEGKAITV…KVGAVDAVVA (190 aa)) is enoyl-CoA hydratase/isomerase. Asp297 serves as a coordination point for substrate. The tract at residues 312–715 (HDVKQAAVLG…MAKNGQRFFN (404 aa)) is 3-hydroxyacyl-CoA dehydrogenase. NAD(+)-binding positions include Met325, Asp344, 401 to 403 (VVE), Lys408, and Ser430. Residue His451 is the For 3-hydroxyacyl-CoA dehydrogenase activity of the active site. Asn454 serves as a coordination point for NAD(+). Residues Asn501 and Tyr660 each coordinate substrate.

In the N-terminal section; belongs to the enoyl-CoA hydratase/isomerase family. The protein in the C-terminal section; belongs to the 3-hydroxyacyl-CoA dehydrogenase family. As to quaternary structure, heterotetramer of two alpha chains (FadB) and two beta chains (FadA).

The enzyme catalyses a (3S)-3-hydroxyacyl-CoA + NAD(+) = a 3-oxoacyl-CoA + NADH + H(+). The catalysed reaction is a (3S)-3-hydroxyacyl-CoA = a (2E)-enoyl-CoA + H2O. It catalyses the reaction a 4-saturated-(3S)-3-hydroxyacyl-CoA = a (3E)-enoyl-CoA + H2O. It carries out the reaction (3S)-3-hydroxybutanoyl-CoA = (3R)-3-hydroxybutanoyl-CoA. The enzyme catalyses a (3Z)-enoyl-CoA = a 4-saturated (2E)-enoyl-CoA. The catalysed reaction is a (3E)-enoyl-CoA = a 4-saturated (2E)-enoyl-CoA. It participates in lipid metabolism; fatty acid beta-oxidation. In terms of biological role, involved in the aerobic and anaerobic degradation of long-chain fatty acids via beta-oxidation cycle. Catalyzes the formation of 3-oxoacyl-CoA from enoyl-CoA via L-3-hydroxyacyl-CoA. It can also use D-3-hydroxyacyl-CoA and cis-3-enoyl-CoA as substrate. This chain is Fatty acid oxidation complex subunit alpha, found in Pseudomonas putida (Arthrobacter siderocapsulatus).